The sequence spans 886 residues: Alanine--tRNA ligase (886 aa).

4 residues coordinate Zn(2+): H564, H568, C676, and H680.

The protein belongs to the class-II aminoacyl-tRNA synthetase family. Requires Zn(2+) as cofactor.

It is found in the cytoplasm. The enzyme catalyses tRNA(Ala) + L-alanine + ATP = L-alanyl-tRNA(Ala) + AMP + diphosphate. Catalyzes the attachment of alanine to tRNA(Ala) in a two-step reaction: alanine is first activated by ATP to form Ala-AMP and then transferred to the acceptor end of tRNA(Ala). Also edits incorrectly charged Ser-tRNA(Ala) and Gly-tRNA(Ala) via its editing domain. The polypeptide is Alanine--tRNA ligase (Methylobacterium sp. (strain 4-46)).